We begin with the raw amino-acid sequence, 832 residues long: Prickle-like protein 1-B (832 aa).

One can recognise a PET domain in the interval 14–122 (FGCQRSSTSD…NIKMLSRAVM (109 aa)). 3 LIM zinc-binding domains span residues 124–188 (AMCE…ELLK), 189–249 (PRCS…HYAE), and 250–313 (YCES…EDVH). Disordered stretches follow at residues 312-346 (VHAS…ADQC), 428-455 (QQPS…QRNN), 602-701 (ICQE…KERN), and 766-832 (CSSS…CIIS). Basic and acidic residues-rich tracts occupy residues 432–453 (EDNR…DLQR) and 603–614 (CQEKPPPEEKPM). Basic residues-rich tracts occupy residues 669-680 (RPHHHRRRKSRK) and 816-832 (TKSK…CIIS). Cysteine 829 carries the cysteine methyl ester modification. Cysteine 829 is lipidated: S-farnesyl cysteine. Residues 830–832 (IIS) constitute a propeptide, removed in mature form.

The protein belongs to the prickle / espinas / testin family. As to quaternary structure, interacts with dvl2/dsh and mapk8/jnk1. As to expression, expressed in the dorsal marginal zone of early gastrulae (stage 10). As gastrulation proceeds, expression expands to include the lateral and ventral marginal zones, excluding the few rows of cells above the blastopore lip. Expression moves dorsally with gastrulation cell movements, and by the end of gastrulation expression is seen in dorsal mesoderm and posterior but not anterior neural ectoderm. Expression becomes down-regulated in mesoderm but remains strong in posterior ectoderm through the neurula stages. During tailbud stages, expressed in the pronephric duct, tailbud, tailtip and forming somites. In the most posterior regions, expressed in notochord and in the floorplate of the neural tube with weak expression in the roofplate. At stage 30, expressed in a complex pattern in the head including strong expression in the lens and otic vesicle.

It localises to the cell membrane. In terms of biological role, acts in a planar cell polarity (PCP) complex; polarization along the apical/basal axis of epithelial cells. Regulates the polarized assembly of fibronectrin on the surface of the mesoderm during gastrulation. Essential for gastrulation cell movements, cooperating with dvl2/dsh to activate jnk. Acts together with tes to control axial elongation. This chain is Prickle-like protein 1-B (prickle1-b), found in Xenopus laevis (African clawed frog).